Consider the following 336-residue polypeptide: Small ribosomal subunit protein uS2 (336 aa).

This sequence belongs to the universal ribosomal protein uS2 family.

In Beijerinckia indica subsp. indica (strain ATCC 9039 / DSM 1715 / NCIMB 8712), this protein is Small ribosomal subunit protein uS2.